We begin with the raw amino-acid sequence, 375 residues long: Homoserine O-succinyltransferase (375 aa).

The AB hydrolase-1 domain occupies N48–D358. The Nucleophile role is filled by S154. Residue R224 coordinates substrate. Catalysis depends on residues D319 and H352. D353 serves as a coordination point for substrate.

It belongs to the AB hydrolase superfamily. MetX family. In terms of assembly, homodimer.

The protein resides in the cytoplasm. The catalysed reaction is L-homoserine + succinyl-CoA = O-succinyl-L-homoserine + CoA. It functions in the pathway amino-acid biosynthesis; L-methionine biosynthesis via de novo pathway; O-succinyl-L-homoserine from L-homoserine: step 1/1. Its function is as follows. Transfers a succinyl group from succinyl-CoA to L-homoserine, forming succinyl-L-homoserine. In Azoarcus sp. (strain BH72), this protein is Homoserine O-succinyltransferase.